The chain runs to 364 residues: Urease accessory protein UreD (364 aa).

2 disordered regions span residues 1–37 (MDQDRSGAADAGNPDPGRGPAGSAEARNGAAAASSPA) and 201–250 (PPEV…AGER). 3 stretches are compositionally biased toward low complexity: residues 21 to 37 (AGSAEARNGAAAASSPA), 209 to 218 (APDRGAPAAE), and 236 to 248 (AASSGGTGAAPAG).

This sequence belongs to the UreD family. UreD, UreF and UreG form a complex that acts as a GTP-hydrolysis-dependent molecular chaperone, activating the urease apoprotein by helping to assemble the nickel containing metallocenter of UreC. The UreE protein probably delivers the nickel.

It localises to the cytoplasm. Its function is as follows. Required for maturation of urease via the functional incorporation of the urease nickel metallocenter. The sequence is that of Urease accessory protein UreD from Kocuria rhizophila (strain ATCC 9341 / DSM 348 / NBRC 103217 / DC2201).